We begin with the raw amino-acid sequence, 250 residues long: Kallikrein-14 (250 aa).

Residues 1 to 18 (MFLLLIILQALAVAIAQS) form the signal peptide. Positions 19–23 (QGDHK) are cleaved as a propeptide — activation peptide. The 225-residue stretch at 24–248 (IIGGYRCVRN…YHSWIQRTMQ (225 aa)) folds into the Peptidase S1 domain. Cys51 and Cys67 are oxidised to a cystine. Catalysis depends on charge relay system residues His66 and Asp110. 3 cysteine pairs are disulfide-bonded: Cys142–Cys209, Cys174–Cys188, and Cys199–Cys224. The active-site Charge relay system is the Ser203.

It belongs to the peptidase S1 family. Kallikrein subfamily. Post-translationally, proteolytic cleavage of the activation peptide produces the active enzyme.

It is found in the secreted. Its subcellular location is the extracellular space. Inhibited by SERPINA1, SERPINC1, SERPINE1, SERPINF2, aprotinin, soybean, trypsin inhibitor and leupeptin. Inhibited by serine protease inhibitor SPINK5. Has an autoproteolytic activity which may have a regulatory effect. Activated by citrate and inhibited by zinc and to a lower extent by manganese. Serine-type endopeptidase with a dual trypsin-like and chymotrypsin-like substrate specificity. May activate/inactivate the proteinase-activated receptors F2R, F2RL1 and F2RL3 and other kallikreins including KLK1, KLK3, KLK5 and KLK11. May function in seminal clot liquefaction through direct cleavage of the semenogelin SEMG1 and SEMG2 and activation of KLK3. May function through desmoglein DSG1 cleavage in epidermal desquamation a process by which the most superficial corneocytes are shed from the skin surface. May be involved in several aspects of tumor progression including growth, invasion and angiogenesis. The polypeptide is Kallikrein-14 (Klk14) (Mus musculus (Mouse)).